The primary structure comprises 204 residues: Outer-membrane lipoprotein carrier protein (204 aa).

Positions 1–21 (MKKYLNLTALLLVGISNVTWA) are cleaved as a signal peptide.

This sequence belongs to the LolA family. As to quaternary structure, monomer.

It localises to the periplasm. Functionally, participates in the translocation of lipoproteins from the inner membrane to the outer membrane. Only forms a complex with a lipoprotein if the residue after the N-terminal Cys is not an aspartate (The Asp acts as a targeting signal to indicate that the lipoprotein should stay in the inner membrane). This is Outer-membrane lipoprotein carrier protein from Histophilus somni (strain 2336) (Haemophilus somnus).